The chain runs to 377 residues: Leucine aminopeptidase A (377 aa).

The first 18 residues, 1–18, serve as a signal peptide directing secretion; it reads MRFLPCIATLAATASALA. The propeptide occupies 19 to 79; sequence IGDHVRSDDQ…SNKKQKLAVT (61 aa). A glycan (N-linked (GlcNAc...) asparagine) is linked at Asn87. The Zn(2+) site is built by His176, Asp195, Glu234, and Asp261. N-linked (GlcNAc...) asparagine glycosylation is present at Asn288. Residues Cys310 and Cys314 are joined by a disulfide bond. A Zn(2+)-binding site is contributed by His343.

It belongs to the peptidase M28 family. M28E subfamily. In terms of assembly, monomer. Zn(2+) is required as a cofactor.

It is found in the secreted. Its activity is regulated as follows. Calcium, magnesium and manganese cations reduce peptidase activity to 20.3-51.3 percent. The metal ion chelating reagent EDTA almost completely inhibits activity. The protease inhibitor bacitracin and the aminopeptidase B inhibitor bestatin, as well as DTT and beta-mercaptoethanol act also as lap A inhibitorsD. Its function is as follows. Extracellular aminopeptidase that allows assimilation of proteinaceous substrates. This is Leucine aminopeptidase A (lapA) from Aspergillus oryzae (strain ATCC 42149 / RIB 40) (Yellow koji mold).